A 235-amino-acid polypeptide reads, in one-letter code: Sugar fermentation stimulation protein homolog (235 aa).

It belongs to the SfsA family.

The polypeptide is Sugar fermentation stimulation protein homolog (Pseudomonas paraeruginosa (strain DSM 24068 / PA7) (Pseudomonas aeruginosa (strain PA7))).